A 478-amino-acid polypeptide reads, in one-letter code: Sphingomyelin synthase-related protein 1 (478 aa).

Over residues 1–22 the composition is skewed to low complexity; sequence MPAGSRAGSRLRSGSLPRPSRL. The disordered stretch occupies residues 1–65; sequence MPAGSRAGSR…TAEEVEKEMA (65 aa). The 67-residue stretch at 75–141 folds into the SAM domain; that stretch reads WTTKHVAVWL…MLSVRKLQKI (67 aa). Transmembrane regions (helical) follow at residues 216–236, 264–284, 295–315, 341–361, 385–405, and 410–430; these read ILSCVYVFIVFGFTSFIMVIV, FSMTEVCGVILCYIWILVLLL, LCSLMGTVFLLRCFTMFVTSL, AIWSGFGMTLTGVHTCGDYMF, FLHTLSWVLNLFGIFFILAAH, and IDVFIAFYITTRLFLYYHTLA. The Cytoplasmic segment spans residues 431–478; it reads NTRAYHQSRRARIWFPMFSFFECNVNGTVPNEYCWPFSKPAIMKRLIG.

Belongs to the sphingomyelin synthase family. In terms of tissue distribution, expressed ubiquitously with highest levels in macrophages and testis.

The protein localises to the endoplasmic reticulum membrane. It carries out the reaction an N-acylsphing-4-enine + a 1,2-diacyl-sn-glycero-3-phosphoethanolamine = an N-acylsphing-4-enine 1-phosphoethanolamine + a 1,2-diacyl-sn-glycerol. The catalysed reaction is an N-acylsphinganine + a 1,2-diacyl-sn-glycero-3-phosphoethanolamine = an N-acylsphinganine-1-phosphoethanolamine + a 1,2-diacyl-sn-glycerol. It catalyses the reaction an N-acyl-(4R)-4-hydroxysphinganine + a 1,2-diacyl-sn-glycero-3-phosphoethanolamine = an N-acyl-(4R)-4-hydroxysphinganine-1-phosphoethanolamine + a 1,2-diacyl-sn-glycerol. The enzyme catalyses N-hexadecanoylsphinganine + a 1,2-diacyl-sn-glycero-3-phosphoethanolamine = N-hexadecanoyl-sphinganine-1-phosphoethanolamine + a 1,2-diacyl-sn-glycerol. It carries out the reaction N-hexadecanoyl-(4R)-hydroxysphinganine + a 1,2-diacyl-sn-glycero-3-phosphoethanolamine = N-hexadecanoyl-(4R)-hydroxysphinganine-1-phosphoethanolamine + a 1,2-diacyl-sn-glycerol. It functions in the pathway sphingolipid metabolism. In terms of biological role, synthesizes sphingolipids through transfer of a phosphatidyl head group from a glycerophospholipid on to the primary hydroxyl of a ceramide in the lumen of the endoplasmic reticulum. Catalyzes the synthesis of ceramide phosphoethanolamines (CPEs) (such as N-acylsphing-4-enine 1-phosphoethanolamine) by transferring phosphoethanolamine head group, which is smaller and more hydrophilic than the phosphocholine (PC) headgroup transferred in the canonical sphingomyelin synthesis (SMS) reaction by SMS1 or SMS2, from a phosphatidylethanolamine (1,2-diacyl-sn-glycero-3-phosphoethanolamine, PE) to a ceramide (such as N-acylsphing-4-enine). The larger PC prevents an efficient fit in the enzyme's catalytic pocket, leading to little or no SMS activity. In vitro, in the absence of ceramide, it has PLC activity with preference for phosphatidylinositol and phosphatidic acid, but also hydrolyzes phosphatidylethanolamine. The protein is Sphingomyelin synthase-related protein 1 of Mus musculus (Mouse).